Reading from the N-terminus, the 500-residue chain is Protein gar2 (500 aa).

Composition is skewed to basic and acidic residues over residues 1-41 (MAKK…KEIA) and 59-68 (KRASSPEPSK). The segment at 1-262 (MAKKDKTSVK…TKPSQDSNET (262 aa)) is disordered. Residues 69-78 (KSVKKQKKSK) show a composition bias toward basic residues. Residues 90–120 (ESSSSESESSSSESESSSSESESSSSESSSS) are compositionally biased toward low complexity. Basic and acidic residues predominate over residues 126–137 (VIVKTEEKKESS). 3 positions are modified to phosphoserine: Ser-143, Ser-144, and Ser-146. The segment covering 152-163 (AVVKIEEKKESS) has biased composition (basic and acidic residues). Low complexity predominate over residues 164-182 (SDSSSESSSSESESESSSS). Basic and acidic residues predominate over residues 191-201 (VEKTEEKKEGS). The span at 202 to 218 (SESSSDSESSSDSSSES) shows a compositional bias: low complexity. The segment covering 219 to 233 (GDSDSSSDSESESSS) has biased composition (acidic residues). Over residues 234–250 (EDEKKRKAEPASEERPA) the composition is skewed to basic and acidic residues. 2 consecutive RRM domains span residues 263 to 341 (CTVF…LSNP) and 366 to 443 (DTVF…FSTP). The tract at residues 441–500 (STPRTGGGSRGGRGGFGGRGGFGGRGGFGGGRGRGRGGARSGNPNRGSVAPFSGNKVTFD) is disordered. The span at 445 to 480 (TGGGSRGGRGGFGGRGGFGGRGGFGGGRGRGRGGAR) shows a compositional bias: gly residues.

This sequence belongs to the RRM GAR family.

It localises to the nucleus. The protein localises to the nucleolus. Helps the assembly of pre-ribosomal particles containing 18S rRNA. This chain is Protein gar2 (gar2), found in Schizosaccharomyces pombe (strain 972 / ATCC 24843) (Fission yeast).